We begin with the raw amino-acid sequence, 753 residues long: Replication restart protein PriA (753 aa).

The Helicase ATP-binding domain maps to 228 to 395; sequence SLITTKFQTC…LSKKYTLSVL (168 aa). An ATP-binding site is contributed by 241-248; it reads GVTGSGKT. The DEAH box signature appears at 337-340; sequence DEEH. Zn(2+) contacts are provided by Cys-458, Cys-461, Cys-467, Cys-470, Cys-485, Cys-488, Cys-499, and Cys-502. The 156-residue stretch at 491–646 folds into the Helicase C-terminal domain; it reads RLSKPITSCP…DFPAFYKEEI (156 aa).

It belongs to the helicase family. PriA subfamily. Component of the replication restart primosome. Zn(2+) serves as cofactor.

It carries out the reaction Couples ATP hydrolysis with the unwinding of duplex DNA by translocating in the 3'-5' direction.. The catalysed reaction is ATP + H2O = ADP + phosphate + H(+). Its function is as follows. Initiates the restart of stalled replication forks, which reloads the replicative helicase on sites other than the origin of replication. Recognizes and binds to abandoned replication forks and remodels them to uncover a helicase loading site. Promotes assembly of the primosome at these replication forks. This Chlamydia muridarum (strain MoPn / Nigg) protein is Replication restart protein PriA.